The chain runs to 118 residues: MKKNNSNPLKINEYHTLVNKLFLLIEENIDKNQEKCDIDCELHHNMLIINLNNTNQVIINKQESLKQIWLATKKNGYHFEYINKQWICNRTKKDFWNVLQESCVYQTNKCIQFLKNIY.

The protein belongs to the frataxin family.

In terms of biological role, involved in iron-sulfur (Fe-S) cluster assembly. May act as a regulator of Fe-S biogenesis. This Buchnera aphidicola subsp. Baizongia pistaciae (strain Bp) protein is Iron-sulfur cluster assembly protein CyaY.